The primary structure comprises 366 residues: 5-amino-6-(D-ribitylamino)uracil--L-tyrosine 4-hydroxyphenyl transferase (366 aa).

Positions Arg-51–Asp-290 constitute a Radical SAM core domain. 3 residues coordinate [4Fe-4S] cluster: Cys-70, Cys-74, and Cys-77.

It belongs to the radical SAM superfamily. CofH family. Consists of two subunits, CofG and CofH. The cofactor is [4Fe-4S] cluster.

The catalysed reaction is 5-amino-6-(D-ribitylamino)uracil + L-tyrosine + S-adenosyl-L-methionine = 5-amino-5-(4-hydroxybenzyl)-6-(D-ribitylimino)-5,6-dihydrouracil + 2-iminoacetate + 5'-deoxyadenosine + L-methionine + H(+). It participates in cofactor biosynthesis; coenzyme F0 biosynthesis. In terms of biological role, catalyzes the radical-mediated synthesis of 5-amino-5-(4-hydroxybenzyl)-6-(D-ribitylimino)-5,6-dihydrouracil from 5-amino-6-(D-ribitylamino)uracil and L-tyrosine. The sequence is that of 5-amino-6-(D-ribitylamino)uracil--L-tyrosine 4-hydroxyphenyl transferase from Methanospirillum hungatei JF-1 (strain ATCC 27890 / DSM 864 / NBRC 100397 / JF-1).